A 398-amino-acid polypeptide reads, in one-letter code: S-adenosylmethionine decarboxylase proenzyme (398 aa).

Residues Glu-18 and Glu-21 contribute to the active site. Ser-78 acts as the Schiff-base intermediate with substrate; via pyruvic acid in catalysis. Ser-78 carries the pyruvic acid (Ser); by autocatalysis modification. Cys-92 acts as the Proton donor; for catalytic activity in catalysis. Catalysis depends on proton acceptor; for processing activity residues Ser-243 and His-256.

This sequence belongs to the eukaryotic AdoMetDC family. Pyruvate is required as a cofactor. In terms of processing, is synthesized initially as an inactive proenzyme. Formation of the active enzyme involves a self-maturation process in which the active site pyruvoyl group is generated from an internal serine residue via an autocatalytic post-translational modification. Two non-identical subunits are generated from the proenzyme in this reaction, and the pyruvate is formed at the N-terminus of the alpha chain, which is derived from the carboxyl end of the proenzyme. The post-translation cleavage follows an unusual pathway, termed non-hydrolytic serinolysis, in which the side chain hydroxyl group of the serine supplies its oxygen atom to form the C-terminus of the beta chain, while the remainder of the serine residue undergoes an oxidative deamination to produce ammonia and the pyruvoyl group blocking the N-terminus of the alpha chain.

The enzyme catalyses S-adenosyl-L-methionine + H(+) = S-adenosyl 3-(methylsulfanyl)propylamine + CO2. Its pathway is amine and polyamine biosynthesis; S-adenosylmethioninamine biosynthesis; S-adenosylmethioninamine from S-adenosyl-L-methionine: step 1/1. This is S-adenosylmethionine decarboxylase proenzyme (SAMDC) from Oryza sativa subsp. indica (Rice).